The sequence spans 206 residues: Amelogenin, Y isoform (206 aa).

The signal sequence occupies residues 1–16 (MGTWILFACLVGAAFA). Residues 118–180 (VPGQQSMTPT…PPLPPMFPLR (63 aa)) are disordered. Positions 128–142 (QHHQPNLPLPAQQPF) are enriched in low complexity. Positions 143–180 (QPQPVQPQPHQPMQPQPPVQPMQPLLPQPPLPPMFPLR) are enriched in pro residues.

This sequence belongs to the amelogenin family.

Its subcellular location is the secreted. It is found in the extracellular space. The protein resides in the extracellular matrix. In terms of biological role, plays a role in biomineralization. Seems to regulate the formation of crystallites during the secretory stage of tooth enamel development. Thought to play a major role in the structural organization and mineralization of developing enamel. This is Amelogenin, Y isoform (AMELY) from Homo sapiens (Human).